The primary structure comprises 1302 residues: MDITESEFTIFEVTPDPNELNNKRIKEIKGGKVNIKELFRYAGVFEIILLIIGIIGSIGVGCLNPLLMILTGDVVDTFVNGENFSKEGGSIKITTEEMNYEIMNSISDTINKLVLKMLYFAIGNMVAGFLQTICFFVLSEYQGIKIRSLYFKALLRQDPGWFDCHKTGELTSKIINDIQKIQDGMSLKFGRLFQTFSSFITGYLIGFIKCWDLTLVVLCMFPFIMVSMMGLGMSAGIFTMKSHKPFSEACSIAEQTIGNIRTVHSLTQERSFCESYNTKIMETDKYNIKKSIGIGTGLGCMMFFIMSSNALGSWYGNFVVRGKGGSDNVKAGTVLTVFMSVLLATQSLSQISTPINILNSAKVAAFNVYQTIDRIPDIDCQSIGGECPTECNGNIRFEDVQFVYPTRLSHHVLKGLDLEIKKGQTIALVGASGCGKSTTIQLIQRNYDPNGGRVTLDGKDIRELNIKWLRNQIGLVGQEPVLFAGTIRENIMLGAKEGATPSEEEMIECAKMANAHDFISKLPEGYDTIIGEKGALLSGGQKQRIAIARALIRNPSILLLDEATSALDTQSEKIVQEALEKASKGRTTIIVAHRLTTVRNADKICVFHQGEIIEQGKHQELMDLKGTYYGLVKRQSMEEEVDQETVENDLKKFREQEDKEVENISLEQTNLHNENSIVKQIKQEYKEEQKKLKHSNRFVLFRVIWNNYKHEYIFCTLGLIGGIGAGAAFPFYSLNFVDLIRVLMKLHPGINLTDEQANSILRSCMIIICIGIITMISFFCYVGLFMAAGEKMIGRIRRRFYYSIMHQNVSWFDRRENMVGAVTTKLTSDPTSLQGISAERVGDIIEIMSTVGFGFGIGLYFSWKLSLCILAVFPIISFFMFINGQLNSKNAAPAKAAYEQCGVTLVEVVEAMKTVQSLGKEDYFSQKYNNDLQIPKRGIIKWGPLLSITNAITNLLTFSINAYGYYLGICFMKKTINYQQDVPNFVDEIIDTFGDIQKALMTINSATTSFAQIGNVLPDVGKAVGAAKSIYNIIDRKPSIDCYSEEGETFNDVKGEIEFKNIHFRYPTRADNEVLKGISFKAEQGKTIALVGASGCGKSTTIQLIERFYDPTSGEVLLDGHNIKDLNIHFLRNQIGLVGQEPVLFAESVIDNIKRGVPEGVEVSNEQIYAAAKMANAHDFISAMPEGYNTMVGDRGSQLSGGQKQRIAIARALIRNPKVLLLDEATSALDSESEKIVQDALDKASKGRTTIVIAHRLSTIQNADKIYVIMRGKIVEQGKHQELIDLKGFYYTLAMQQFGTVN.

A helical transmembrane segment spans residues 43–63 (GVFEIILLIIGIIGSIGVGCL). The 310-residue stretch at 51–360 (IIGIIGSIGV…ISTPINILNS (310 aa)) folds into the ABC transmembrane type-1 1 domain. Residue N83 is glycosylated (N-linked (GlcNAc...) asparagine). Helical transmembrane passes span 118–138 (LYFA…FFVL), 192–212 (LFQT…KCWD), 213–233 (LTLV…GLGM), 292–312 (IGIG…NALG), and 331–351 (AGTV…LSQI). One can recognise an ABC transporter 1 domain in the interval 395–634 (IRFEDVQFVY…KGTYYGLVKR (240 aa)). An ATP-binding site is contributed by 430 to 437 (GASGCGKS). N-linked (GlcNAc...) asparagine glycosylation occurs at N663. A helical transmembrane segment spans residues 712–732 (YIFCTLGLIGGIGAGAAFPFY). One can recognise an ABC transmembrane type-1 2 domain in the interval 713 to 1022 (IFCTLGLIGG…IGNVLPDVGK (310 aa)). The N-linked (GlcNAc...) asparagine glycan is linked to N751. The helical transmembrane segment at 765–785 (MIIICIGIITMISFFCYVGLF) threads the bilayer. The N-linked (GlcNAc...) asparagine glycan is linked to N808. 2 consecutive transmembrane segments (helical) span residues 841–861 (VGDI…GLYF) and 862–882 (SWKL…FMFI). An ABC transporter 2 domain is found at 1057-1296 (IEFKNIHFRY…KGFYYTLAMQ (240 aa)). An ATP-binding site is contributed by 1092–1099 (GASGCGKS).

This sequence belongs to the ABC transporter superfamily. ABCB family. Multidrug resistance exporter (TC 3.A.1.201) subfamily.

The protein resides in the membrane. The enzyme catalyses ATP + H2O + xenobioticSide 1 = ADP + phosphate + xenobioticSide 2.. In terms of biological role, energy-dependent efflux pump responsible for decreased drug accumulation in multidrug resistance parasites. This is Multidrug resistance protein 1 from Entamoeba histolytica (strain ATCC 30459 / HM-1:IMSS / ABRM).